Reading from the N-terminus, the 284-residue chain is Asialoglycoprotein receptor 1 (284 aa).

Over residues 1-18 the composition is skewed to basic and acidic residues; the sequence is MTKDYQDFQHLDNDNDHH. The tract at residues 1-25 is disordered; that stretch reads MTKDYQDFQHLDNDNDHHQLRRGPP. Topologically, residues 1 to 39 are cytoplasmic; that stretch reads MTKDYQDFQHLDNDNDHHQLRRGPPPTPRLLQRLCSGSR. Positions 5-8 match the Endocytosis signal motif; sequence YQDF. A lipid anchor (S-palmitoyl cysteine) is attached at Cys-35. A helical; Signal-anchor for type II membrane protein transmembrane segment spans residues 40–60; that stretch reads LLLLSSSLSILLLVVVCVITS. Positions 59-117 form a coiled coil; the sequence is TSQNSQLREDLLALRQNFSNLTVSTEDQVKALSTQGSSVGRKMKLVESKLEKQQKDLTE. Over 61-284 the chain is Extracellular; sequence QNSQLREDLL…VCETKLDKAN (224 aa). N-linked (GlcNAc...) asparagine glycans are attached at residues Asn-75, Asn-78, and Asn-146. 3 disulfides stabilise this stretch: Cys-153–Cys-164, Cys-181–Cys-276, and Cys-254–Cys-268. The C-type lectin domain maps to 160–277; it reads YEGSCYWFSS…CRRPYRWVCE (118 aa). Ca(2+)-binding residues include Val-190, Glu-196, Asp-215, Gln-239, Asp-241, Glu-252, Asp-253, Asn-264, Asp-265, and Glu-277.

Interacts with LASS2. In terms of processing, phosphorylated on a cytoplasmic Ser residue. As to expression, expressed exclusively in hepatic parenchymal cells.

The protein resides in the membrane. Mediates the endocytosis of plasma glycoproteins to which the terminal sialic acid residue on their complex carbohydrate moieties has been removed. The receptor recognizes terminal galactose and N-acetylgalactosamine units. After ligand binding to the receptor, the resulting complex is internalized and transported to a sorting organelle, where receptor and ligand are disassociated. The receptor then returns to the cell membrane surface. In Mus musculus (Mouse), this protein is Asialoglycoprotein receptor 1 (Asgr1).